Reading from the N-terminus, the 473-residue chain is MSPQTETKASVGFKAGVKDYKLTYYTPDYQTKDTDILAAFRVTPQPGVPPEEAGAAVAAESSTGTWTTVWTDGLTSLDRYKGRCYHIEPVAGEENQFIAYVAYPLDLFEEGSVTNMFTSIVGNVFGFKALRALRLEDLRIPTAYIKTFQGPPHGIQVERDKLNKYGRPLLGCTIKPKLGLSAKNYGRAVYECLRGGLDFTKDDENVNSQPFMRWRDRFLFCAEAIYKAQAETGEIKGHYLNATAGTCEEMIKRAVFARELGVPIVMHDYLTGGFTANTSLAHYCRDNGLLLHIHRAMHAVIDRQKNHGMHFRVLAKALRLSGGDHVHSGTVVGKLEGEREITLGFVDLLRDDFIEKDRSRGIYFTQDWVSLPGVLPVASGGIHVWHMPALTEIFGDDSVLQFGGGTLGHPWGNAPGAVANRVALEACVQARNEGRDLAREGNEIIREASKWSPELAAACEVWKEIKFEFPAMD.

The propeptide occupies 1–2; that stretch reads MS. Positions 123 and 173 each coordinate substrate. The active-site Proton acceptor is the K175. K177 lines the substrate pocket. Mg(2+) contacts are provided by K201, D203, and E204. An N6-carboxylysine modification is found at K201. At S208 the chain carries Phosphoserine. H294 (proton acceptor) is an active-site residue. Substrate contacts are provided by R295 and H327. Residue T330 is modified to Phosphothreonine. Substrate is bound at residue S379.

It belongs to the RuBisCO large chain family. Type I subfamily. Heterohexadecamer of 8 large chains and 8 small chains; disulfide-linked. The disulfide link is formed within the large subunit homodimers. It depends on Mg(2+) as a cofactor. In terms of processing, the disulfide bond which can form in the large chain dimeric partners within the hexadecamer appears to be associated with oxidative stress and protein turnover.

It is found in the plastid. The protein resides in the chloroplast. The enzyme catalyses 2 (2R)-3-phosphoglycerate + 2 H(+) = D-ribulose 1,5-bisphosphate + CO2 + H2O. The catalysed reaction is D-ribulose 1,5-bisphosphate + O2 = 2-phosphoglycolate + (2R)-3-phosphoglycerate + 2 H(+). In terms of biological role, ruBisCO catalyzes two reactions: the carboxylation of D-ribulose 1,5-bisphosphate, the primary event in carbon dioxide fixation, as well as the oxidative fragmentation of the pentose substrate in the photorespiration process. Both reactions occur simultaneously and in competition at the same active site. The chain is Ribulose bisphosphate carboxylase large chain from Sinapis alba (White mustard).